The following is a 916-amino-acid chain: Inter-alpha-trypsin inhibitor heavy chain H4 (916 aa).

The N-terminal stretch at 1 to 27 (MKTPAPGRIHSIVLVLLSLAVLQTSKA) is a signal peptide. In terms of domain architecture, VIT spans 28–149 (QKVQNDIDIY…KVTFELVYEE (122 aa)). N-linked (GlcNAc...) asparagine glycosylation is found at Asn-82 and Asn-208. The VWFA domain maps to 275-458 (NVIFVIDKSG…LQLQDFYQEV (184 aa)). Asn-518 carries N-linked (GlcNAc...) asparagine glycosylation. 2 disordered regions span residues 597-616 (PEGQ…ESRG) and 678-701 (PLAP…TDFR). A compositionally biased stretch (low complexity) spans 678–689 (PLAPASAPSPTS). Ser-683 is a glycosylation site (O-linked (GalNAc...) serine). Residues Thr-705, Thr-706, and Thr-708 are each glycosylated (O-linked (GalNAc...) threonine). Cysteines 733 and 911 form a disulfide.

It belongs to the ITIH family. Interacts (via C-terminus) with DNAJC1 (via SANT 2 domain). Appears to be both N- and O-glycosylated.

Its subcellular location is the secreted. In terms of biological role, type II acute-phase protein (APP) involved in inflammatory responses to trauma. May also play a role in liver development or regeneration. The chain is Inter-alpha-trypsin inhibitor heavy chain H4 (ITIH4) from Bos taurus (Bovine).